We begin with the raw amino-acid sequence, 620 residues long: uncharacterized protein (620 aa).

This sequence belongs to the chlamydial CPn_0512/CT_425/TC_0708 family.

This is an uncharacterized protein from Chlamydia pneumoniae (Chlamydophila pneumoniae).